Reading from the N-terminus, the 380-residue chain is Glucose-1-phosphate adenylyltransferase (380 aa).

Residues Gly-164, 179 to 180 (EK), and Ser-190 each bind alpha-D-glucose 1-phosphate.

It belongs to the bacterial/plant glucose-1-phosphate adenylyltransferase family. Homotetramer.

It carries out the reaction alpha-D-glucose 1-phosphate + ATP + H(+) = ADP-alpha-D-glucose + diphosphate. Its pathway is glycan biosynthesis; glycogen biosynthesis. In terms of biological role, involved in the biosynthesis of ADP-glucose, a building block required for the elongation reactions to produce glycogen. Catalyzes the reaction between ATP and alpha-D-glucose 1-phosphate (G1P) to produce pyrophosphate and ADP-Glc. The polypeptide is Glucose-1-phosphate adenylyltransferase (Streptococcus pneumoniae (strain 70585)).